The following is a 387-amino-acid chain: Eukaryotic translation initiation factor 3 subunit M (387 aa).

Residues 181-340 (LSSKVMIELL…QKVHISSTMH (160 aa)) form the PCI domain.

This sequence belongs to the eIF-3 subunit M family. Component of the eukaryotic translation initiation factor 3 (eIF-3) complex. The eIF-3 complex interacts with pix.

The protein localises to the cytoplasm. The protein resides in the golgi apparatus. In terms of biological role, component of the eukaryotic translation initiation factor 3 (eIF-3) complex, which is involved in protein synthesis of a specialized repertoire of mRNAs and, together with other initiation factors, stimulates binding of mRNA and methionyl-tRNAi to the 40S ribosome. The eIF-3 complex specifically targets and initiates translation of a subset of mRNAs involved in cell proliferation. The sequence is that of Eukaryotic translation initiation factor 3 subunit M from Drosophila sechellia (Fruit fly).